The sequence spans 173 residues: MSGKELNKIVAAILFASLIAMMVGFIANILYKPVLEPKHRGYSIAVQEVSEAPTTQAQAPINIPELMKTANADNGREIAKKCLMCHSLDKDGPNKIGPHLWDVAGRPKASITDYKYSPALSALGGNWDDDSLFAFLHKPSSYAPGTKMSFAGISKPQDIADVILFLKTYVHDK.

The Cytoplasmic segment spans residues 1-8 (MSGKELNK). The chain crosses the membrane as a helical; Signal-anchor span at residues 9-29 (IVAAILFASLIAMMVGFIANI). Topologically, residues 30 to 173 (LYKPVLEPKH…LFLKTYVHDK (144 aa)) are periplasmic. The heme c site is built by Cys-82, Cys-85, His-86, and Met-148.

Belongs to the cytochrome c family. Post-translationally, binds 1 heme c group covalently per subunit.

It is found in the cell membrane. Functionally, may be involved in electron transfer from bc1 complex to aa3. This Rickettsia bellii (strain RML369-C) protein is Cytochrome c homolog (cycM).